A 439-amino-acid chain; its full sequence is Xaa-Pro dipeptidase (439 aa).

Mn(2+) contacts are provided by aspartate 244, aspartate 255, histidine 335, glutamate 380, and glutamate 419.

This sequence belongs to the peptidase M24B family. Bacterial-type prolidase subfamily. The cofactor is Mn(2+).

It carries out the reaction Xaa-L-Pro dipeptide + H2O = an L-alpha-amino acid + L-proline. Its function is as follows. Splits dipeptides with a prolyl residue in the C-terminal position. This Shewanella sp. (strain MR-4) protein is Xaa-Pro dipeptidase.